Reading from the N-terminus, the 278-residue chain is Hydroxyethylthiazole kinase (278 aa).

Met46 lines the substrate pocket. Arg122 and Thr168 together coordinate ATP. Gly195 is a binding site for substrate.

It belongs to the Thz kinase family. Requires Mg(2+) as cofactor.

The catalysed reaction is 5-(2-hydroxyethyl)-4-methylthiazole + ATP = 4-methyl-5-(2-phosphooxyethyl)-thiazole + ADP + H(+). The protein operates within cofactor biosynthesis; thiamine diphosphate biosynthesis; 4-methyl-5-(2-phosphoethyl)-thiazole from 5-(2-hydroxyethyl)-4-methylthiazole: step 1/1. Catalyzes the phosphorylation of the hydroxyl group of 4-methyl-5-beta-hydroxyethylthiazole (THZ). The protein is Hydroxyethylthiazole kinase of Chloroflexus aggregans (strain MD-66 / DSM 9485).